Here is a 65-residue protein sequence, read N- to C-terminus: Large ribosomal subunit protein bL35 (65 aa).

The protein belongs to the bacterial ribosomal protein bL35 family.

This is Large ribosomal subunit protein bL35 from Yersinia pseudotuberculosis serotype O:1b (strain IP 31758).